The following is a 210-amino-acid chain: Protein-L-isoaspartate O-methyltransferase (210 aa).

Residue S54 is part of the active site.

This sequence belongs to the methyltransferase superfamily. L-isoaspartyl/D-aspartyl protein methyltransferase family.

The protein localises to the cytoplasm. It catalyses the reaction [protein]-L-isoaspartate + S-adenosyl-L-methionine = [protein]-L-isoaspartate alpha-methyl ester + S-adenosyl-L-homocysteine. Functionally, catalyzes the methyl esterification of L-isoaspartyl residues in peptides and proteins that result from spontaneous decomposition of normal L-aspartyl and L-asparaginyl residues. It plays a role in the repair and/or degradation of damaged proteins. The polypeptide is Protein-L-isoaspartate O-methyltransferase (Methanothrix thermoacetophila (strain DSM 6194 / JCM 14653 / NBRC 101360 / PT) (Methanosaeta thermophila)).